A 170-amino-acid chain; its full sequence is Gas vesicle protein A2 (170 aa).

The tract at residues 86–170 is disordered; that stretch reads SPMAKTVGRA…PRRRTEEEDR (85 aa). 2 stretches are compositionally biased toward basic and acidic residues: residues 104–119 and 127–137; these read LTDKVRDVLTPEHEHE and DRPRAGAERGR. Positions 138–148 are enriched in basic residues; sequence STQRPRSRPAA. The span at 149 to 170 shows a compositional bias: basic and acidic residues; sequence RPRDEDDRPRSRPRRRTEEEDR.

The protein belongs to the gas vesicle GvpA family. As to quaternary structure, the gas vesicle shell is 2 nm thick and consists of a single layer of this protein. It forms helical ribs nearly perpendicular to the long axis of the vesicle.

Its subcellular location is the gas vesicle shell. In terms of biological role, gas vesicles are hollow, gas filled proteinaceous nanostructures found in some microorganisms. During planktonic growth they allow positioning of the organism at a favorable depth for light or nutrient acquisition. GvpA forms the protein shell. It is not clear what function GVs perform in soil bacteria. This Streptomyces coelicolor (strain ATCC BAA-471 / A3(2) / M145) protein is Gas vesicle protein A2.